Here is a 68-residue protein sequence, read N- to C-terminus: Long neurotoxin 1 (68 aa).

5 disulfide bridges follow: cysteine 3/cysteine 20, cysteine 13/cysteine 41, cysteine 26/cysteine 30, cysteine 45/cysteine 56, and cysteine 57/cysteine 62.

This sequence belongs to the three-finger toxin family. Long-chain subfamily. Type II alpha-neurotoxin sub-subfamily. Expressed by the venom gland.

The protein localises to the secreted. Binds with high affinity to muscular (alpha-1/CHRNA1) and neuronal (alpha-7/CHRNA7) nicotinic acetylcholine receptor (nAChR) and inhibits acetylcholine from binding to the receptor, thereby impairing neuromuscular and neuronal transmission. The chain is Long neurotoxin 1 from Aspidelaps scutatus (Shield-nose snake).